Reading from the N-terminus, the 2109-residue chain is MDALESLLDEVALEGLDGLCLPALWSRLETRVPPFPLPLEPCTQEFLWRALATHPGISFYEEPRERPDLQLQDRYEEIDLETGILESRRDPVALEDVYPIHMILENKDGIQGSCRYFKERKNITNDIRTKSLQPRCTMVEAFDRWGKKLIIVASQAMRYRALIGQEGDPDLKLPDFSYCILERLGRSRWQGELQRDLHTTAFKVDAGKLHYHRKILNKNGLITMQSHVIRLPTGAQQHSILLLLNRFHVDRRSKYDILMEKLSVMLSTRTNHIETLGKLREELGLCERTFKRLYQYMLNAGLAKVVSLRLQEIHPECGPCKTKKGTDVMVRCLKLLKEFKRNDHDDDEDEEVISKTVPPVDIVFERDMLTQTYDLIERRGTKGISQAEIRVAMNVGKLEARMLCRLLQRFKVVKGFMEDEGRQRTTKYISCVFAEESDLSRQYQREKARSELLTTVSLASMQEESLLPEGEDTFLSESDSEEERSSSKRRGRGSQKDTRASANLRPKTQPHHSTPTKGGWKVVNLHPLKKQPPSFPGAAEERACQSLASRDSLLDTSSVSEPNVSFVSHCADSNSGDIAVIEEVRMENPKESSSSLKTGRHSSGQDKPHETYRLLKRRNLIIEAVTNLRLIESLFTIQKMIMDQEKQEGVSTKCCKKSIVRLVRNLSEEGLLRLYRTTVIQDGIKKKVDLVVHPSMDQNDPLVRSAIEQVRFRISNSSTANRVKTSQPPVPQGEAEEDSQGKEGPSGSGDSQLSASSRSESGRMKKSDNKMGITPLRNYHPIVVPGLGRSLGFLPKMPRLRVVHMFLWYLIYGHPASNTVEKPSFISERRTIKQESGRAGVRPSSSGSAWEACSEAPSKGSQDGVTWEAEVELATETVYVDDASWMRYIPPIPVHRDFGFGWALVSDILLCLPLSIFIQIVQVSYKVDNLEEFLNDPLKKHTLIRFLPRPIRQQLLYKRRYIFSVVENLQRLCYMGLLQFGPTEKFQDKDQVFIFLKKNAVIVDTTICDPHYNLARSSRPFERRLYVLNSMQDVENYWFDLQCVCLNTPLGVVRCPRVRKNSSTDQGSDEEGSLQKEQESAMDKHNLERKCAMLEYTTGSREVVDEGLIPGDGLGAAGLDSSFYGHLKRNWIWTSYIINQAKKENTAAENGLTVRLQTFLSKRPMPLSARGNSRLNIWGEARVGSELCAGWEEQFEVDREPSLDRNRRVRGGKSQKRKRLKKDPGKKIKRKKKGEFPGEKSKRLRYHDEADQSALQRMTRLRVTWSMQEDGLLVLCRIASNVLNTKVKGPFVTWQVVRDILHATFEESLDKTSHSVGRRARYIVKNPQAYLNYKVCLAEVYQDKALVGDFMNRRGDYDDPKVCANEFKEFVEKLKEKFSSALRNSNLEIPDTLQELFARYRVLAIGDEKDQTRKEDELNSVDDIHFLVLQNLIQSTLALSDSQMKSYQSFQTFRLYREYKDHVLVKAFMECQKRSLVNRRRVNHTLGPKKNRALPFVPMSYQLSQTYYRIFTWRFPSTICTESFQFLDRMRAAGKLDQPDRFSFKDQDNNEPTNDMVAFSLDGPGGNCVAVLTLFSLGLISVDVRIPEQIIVVDSSMVENEVIKSLGKDGSLEDDEDEEDDLDEGVGGKRRSMEVKPAQASHTNYLLMRGYYSPGIVSTRNLNPNDSIVVNSCQMKFQLRCTPVPARLRPAAAPLEELTMGTSCLPDTFTKLINPQENTCSLEEFVLQLELSGYSPEDLTAALEILEAIIATGCFGIDKEELRRRFSALEKAGGGRTRTFADCIQALLEQHQVLEVGGNTARLVAMGSAWPWLLHSVRLKDREDADIQREDPQARPLEGSSSEDSPPEGQAPPSHSPRGTKRRASWASENGETDAEGTQMTPAKRPALQDSNLAPSLGPGAEDGAEAQAPSPPPALEDTAAAGAAQEDQEGVGEFSSPGQEQLSGQAQPPEGSEDPRGFTESFGAANISQAARERDCESVCFIGRPWRVVDGHLNLPVCKGMMEAMLYHIMTRPGIPESSLLRHYQGVLQPVAVLELLQGLESLGCIRKRWLRKPRPVSLFSTPVVEEVEVPSSLDESPMAFYEPTLDCTLRLGRVFPHEVNWNKWIHL.

Positions 467 to 521 (LPEGEDTFLSESDSEEERSSSKRRGRGSQKDTRASANLRPKTQPHHSTPTKGGWK) are disordered. A compositionally biased stretch (acidic residues) spans 469–482 (EGEDTFLSESDSEE). Residue Lys529 forms a Glycyl lysine isopeptide (Lys-Gly) (interchain with G-Cter in SUMO2) linkage. The interval 586–609 (MENPKESSSSLKTGRHSSGQDKPH) is disordered. The residue at position 667 (Ser667) is a Phosphoserine. The segment covering 718–727 (STANRVKTSQ) has biased composition (polar residues). Residues 718–775 (STANRVKTSQPPVPQGEAEEDSQGKEGPSGSGDSQLSASSRSESGRMKKSDNKMGITP) are disordered. Phosphoserine is present on Ser739. Residues 748 to 759 (SGDSQLSASSRS) show a composition bias toward low complexity. Positions 760-769 (ESGRMKKSDN) are enriched in basic and acidic residues. Glycyl lysine isopeptide (Lys-Gly) (interchain with G-Cter in SUMO2) cross-links involve residues Lys770 and Lys833. 2 disordered regions span residues 836-857 (SGRAGVRPSSSGSAWEACSEAP) and 1059-1082 (RKNSSTDQGSDEEGSLQKEQESAM). Phosphoserine occurs at positions 1062 and 1068. The span at 1073-1082 (SLQKEQESAM) shows a compositional bias: basic and acidic residues. A Glycyl lysine isopeptide (Lys-Gly) (interchain with G-Cter in SUMO2) cross-link involves residue Lys1142. Residues 1202–1241 (SLDRNRRVRGGKSQKRKRLKKDPGKKIKRKKKGEFPGEKS) are disordered. Positions 1207 to 1221 (RRVRGGKSQKRKRLK) are enriched in basic residues. Phosphoserine occurs at positions 1253 and 1611. The segment at 1608–1631 (KDGSLEDDEDEEDDLDEGVGGKRR) is disordered. Residues 1612 to 1624 (LEDDEDEEDDLDE) are compositionally biased toward acidic residues. Residues Ser1632 and Ser1653 each carry the phosphoserine modification. Residues 1823–1833 (EDADIQREDPQ) are compositionally biased toward basic and acidic residues. Positions 1823–1961 (EDADIQREDP…GSEDPRGFTE (139 aa)) are disordered. Residues 1838 to 1848 (EGSSSEDSPPE) are compositionally biased toward low complexity. Residues Ser1856, Ser1865, Ser1868, Ser1896, and Ser1911 each carry the phosphoserine modification. Positions 1916 to 1926 (LEDTAAAGAAQ) are enriched in low complexity. The segment covering 1937–1947 (SPGQEQLSGQA) has biased composition (polar residues). Position 1969 is a phosphoserine (Ser1969).

The protein belongs to the TFIIIC subunit 1 family. As to quaternary structure, part of the TFIIIC subcomplex TFIIIC2, consisting of six subunits, GTF3C1, GTF3C2, GTF3C3, GTF3C4, GTF3C5 and GTF3C6. Interacts with IGHMBP2. Interacts with MAF1.

Its subcellular location is the nucleus. Its function is as follows. Required for RNA polymerase III-mediated transcription. Component of TFIIIC that initiates transcription complex assembly on tRNA and is required for transcription of 5S rRNA and other stable nuclear and cytoplasmic RNAs. Binds to the box B promoter element. This Homo sapiens (Human) protein is General transcription factor 3C polypeptide 1 (GTF3C1).